Here is a 429-residue protein sequence, read N- to C-terminus: ATP-dependent RNA helicase RhlB (429 aa).

The short motif at 9-37 (EKFAQMGLEPEVLAGLESKGFHYCTPIQA) is the Q motif element. The Helicase ATP-binding domain occupies 40-219 (LPLLVEGHDL…YEHMNHPEHV (180 aa)). 53 to 60 (AQTGTGKT) provides a ligand contact to ATP. Residues 165 to 168 (DEAD) carry the DEAD box motif. Residues 243 to 390 (KMLLLLSLME…VSKYDREALL (148 aa)) enclose the Helicase C-terminal domain. Residues 395 to 429 (APKRVVRNRQPVNRNMRDRQGGGNSNNRRRPPRKS) are disordered.

This sequence belongs to the DEAD box helicase family. RhlB subfamily. As to quaternary structure, component of the RNA degradosome, which is a multiprotein complex involved in RNA processing and mRNA degradation.

It localises to the cytoplasm. It carries out the reaction ATP + H2O = ADP + phosphate + H(+). In terms of biological role, DEAD-box RNA helicase involved in RNA degradation. Has RNA-dependent ATPase activity and unwinds double-stranded RNA. The sequence is that of ATP-dependent RNA helicase RhlB from Aeromonas salmonicida (strain A449).